Consider the following 114-residue polypeptide: Large ribosomal subunit protein bL20c (114 aa).

This sequence belongs to the bacterial ribosomal protein bL20 family.

It localises to the plastid. The protein localises to the chloroplast. Its function is as follows. Binds directly to 23S ribosomal RNA and is necessary for the in vitro assembly process of the 50S ribosomal subunit. It is not involved in the protein synthesizing functions of that subunit. This Guillardia theta (Cryptophyte) protein is Large ribosomal subunit protein bL20c (rpl20).